The chain runs to 772 residues: Endoplasmic reticulum membrane sensor NFE2L1 (772 aa).

A helical; Signal-anchor for type II membrane protein membrane pass occupies residues 7-24; sequence YLTEGLLQFTILLSLIGV. Residues 108–148 form a disordered region; sequence DPEGSVSGSQPNSGLALESSSGLQDVTGPDNGVRESETEQG. The segment covering 113 to 131 has biased composition (polar residues); that stretch reads VSGSQPNSGLALESSSGLQ. The cholesterol recognition/amino acid consensus (CRAC) region stretch occupies residues 191 to 199; that stretch reads VFDYSHRQK. N-linked (GlcNAc...) asparagine glycosylation occurs at Asn-348. The segment at 379–383 is CPD; the sequence is SPEVE. N-linked (GlcNAc...) asparagine glycosylation is found at Asn-412 and Asn-423. The interval 470 to 532 is disordered; it reads EEEFDSDSGL…AVGYSSDSET (63 aa). The Destruction motif motif lies at 476-480; it reads DSGLS. The span at 476–523 shows a compositional bias: low complexity; sequence DSGLSLDSSHSPSSLSSSEGSSSSSSSSSSSSSSASSSASSSFSEEGA. Ser-528 carries the post-translational modification Phosphoserine; by CK2. At Ser-599 the chain carries Phosphoserine; by PKA. Residues 654–717 form the bZIP domain; it reads LIRDIRRRGK…RQMKQKVQSL (64 aa). The interval 656–675 is basic motif; sequence RDIRRRGKNKMAAQNCRKRK. The tract at residues 682–696 is leucine-zipper; it reads LERDVEDLQRDKARL. The segment at 753-772 is disordered; it reads RTMADQQARRQERKPKDRRK. The Nuclear localization signal signature appears at 761–768; sequence RRQERKPK. Basic residues predominate over residues 763–772; the sequence is QERKPKDRRK.

It belongs to the bZIP family. CNC subfamily. As to quaternary structure, interacts with KEAP1. Interacts (via CPD region) with FBXW7; leading to its ubiquitination and degradation. Interacts with SYVN1/HRD1; leading to its ubiquitination and degradation. Interacts (when ubiquitinated) with DDI2; leading to its cleavage. In terms of assembly, interacts (via the bZIP domain) with small MAF protein (MAFF, MAFG or MAFK); required for binding to antioxidant response elements (AREs) on DNA. Interacts (via Destruction motif) with BTRC; leading to its ubiquitination and degradation. Interacts with CEBPB; the heterodimer represses expression of DSPP during odontoblast differentiation. Interacts with MOTS-c, a peptide produced by the mitochondrially encoded 12S rRNA MT-RNR1. Post-translationally, cleaved at Leu-104 by the aspartyl protease DDI2 following retrotranslocation, releasing the protein from the endoplasmic reticulum membrane and forming the transcription factor NRF1 that translocates into the nucleus. Ubiquitination is prerequisite for cleavage by aspartyl protease DDI2. In terms of processing, N-glycosylated in normal conditions, when it has a single-pass type II membrane protein topology, with the DNA-binding domain facing the endoplasmic reticulum lumen. Deglycosylated during retrotranslocation to the cytosolic side of the membrane, to have a single-pass type III membrane protein topology with the major part of the protein facing the cytosol. Ubiquitinated by the SCF(FBXW7) complex and SYVN1/HRD1, leading to its degradation by the proteasome. Ubiquitinated during retrotranslocation to the cytosolic side of the membrane: ubiquitination does not lead to degradation and is required for processing by the aspartyl protease DDI2 and subsequent release from the endoplasmic reticulum membrane. Post-translationally, phosphorylation by CK2 at Ser-528 inhibits transcription factor activity, possibly by affecting DNA-binding activity. Phosphorylation at Ser-599 is required for interaction with CEBPB. In terms of processing, ubiquitinated by the SCF(BTRC) complex in the nucleus, leading to its degradation by the proteasome.

It localises to the endoplasmic reticulum membrane. Its subcellular location is the nucleus. Endoplasmic reticulum membrane sensor that translocates into the nucleus in response to various stresses to act as a transcription factor. Constitutes a precursor of the transcription factor NRF1. Able to detect various cellular stresses, such as cholesterol excess, oxidative stress or proteasome inhibition. In response to stress, it is released from the endoplasmic reticulum membrane following cleavage by the protease DDI2 and translocates into the nucleus to form the transcription factor NRF1. Acts as a key sensor of cholesterol excess: in excess cholesterol conditions, the endoplasmic reticulum membrane form of the protein directly binds cholesterol via its CRAC motif, preventing cleavage and release of the transcription factor NRF1, thereby allowing expression of genes promoting cholesterol removal, such as CD36. Involved in proteasome homeostasis: in response to proteasome inhibition, it is released from the endoplasmic reticulum membrane, translocates to the nucleus and activates expression of genes encoding proteasome subunits. Functionally, CNC-type bZIP family transcription factor that translocates to the nucleus and regulates expression of target genes in response to various stresses. Heterodimerizes with small-Maf proteins (MAFF, MAFG or MAFK) and binds DNA motifs including the antioxidant response elements (AREs), which regulate expression of genes involved in oxidative stress response. Activates or represses expression of target genes, depending on the context. Plays a key role in cholesterol homeostasis by acting as a sensor of cholesterol excess: in low cholesterol conditions, translocates into the nucleus and represses expression of genes involved in defense against cholesterol excess, such as CD36. In excess cholesterol conditions, the endoplasmic reticulum membrane form of the protein directly binds cholesterol via its CRAC motif, preventing cleavage and release of the transcription factor NRF1, thereby allowing expression of genes promoting cholesterol removal. Critical for redox balance in response to oxidative stress: acts by binding the AREs motifs on promoters and mediating activation of oxidative stress response genes, such as GCLC, GCLM, GSS, MT1 and MT2. Plays an essential role during fetal liver hematopoiesis: probably has a protective function against oxidative stress and is involved in lipid homeostasis in the liver. Involved in proteasome homeostasis: in response to proteasome inhibition, mediates the 'bounce-back' of proteasome subunits by translocating into the nucleus and activating expression of genes encoding proteasome subunits. Also involved in regulating glucose flux. Together with CEBPB; represses expression of DSPP during odontoblast differentiation. In response to ascorbic acid induction, activates expression of SP7/Osterix in osteoblasts. The polypeptide is Endoplasmic reticulum membrane sensor NFE2L1 (Pongo abelii (Sumatran orangutan)).